Reading from the N-terminus, the 145-residue chain is D-aminoacyl-tRNA deacylase (145 aa).

Positions 137 to 138 (GP) match the Gly-cisPro motif, important for rejection of L-amino acids motif.

It belongs to the DTD family. In terms of assembly, homodimer.

The protein localises to the cytoplasm. It carries out the reaction glycyl-tRNA(Ala) + H2O = tRNA(Ala) + glycine + H(+). The enzyme catalyses a D-aminoacyl-tRNA + H2O = a tRNA + a D-alpha-amino acid + H(+). In terms of biological role, an aminoacyl-tRNA editing enzyme that deacylates mischarged D-aminoacyl-tRNAs. Also deacylates mischarged glycyl-tRNA(Ala), protecting cells against glycine mischarging by AlaRS. Acts via tRNA-based rather than protein-based catalysis; rejects L-amino acids rather than detecting D-amino acids in the active site. By recycling D-aminoacyl-tRNA to D-amino acids and free tRNA molecules, this enzyme counteracts the toxicity associated with the formation of D-aminoacyl-tRNA entities in vivo and helps enforce protein L-homochirality. This Legionella pneumophila (strain Paris) protein is D-aminoacyl-tRNA deacylase.